We begin with the raw amino-acid sequence, 221 residues long: Response regulator protein PmrA (221 aa).

The 115-residue stretch at 2 to 116 (RILLAEDDLL…ELQARVRALT (115 aa)) folds into the Response regulatory domain. Asp51 carries the 4-aspartylphosphate modification. Residues 124–218 (LPQLVHGELR…VRGIGYGIDQ (95 aa)) constitute a DNA-binding region (ompR/PhoB-type).

The protein localises to the cytoplasm. Functionally, member of the two-component regulatory system PmrA/PmrB that plays a role in the regulation of resistance towards polymyxin B and cationic antimicrobial peptides in response to limiting concentrations of Mg(2+). Functions as a transcriptional activator by direct binding to a cis-acting sequence upstream of the target gene promoters including lipase lipA and pmrH promoters. Also autoregulates its own pmrAB operon under Mg(2+)-limiting conditions. The sequence is that of Response regulator protein PmrA (pmrA) from Pseudomonas aeruginosa (strain ATCC 15692 / DSM 22644 / CIP 104116 / JCM 14847 / LMG 12228 / 1C / PRS 101 / PAO1).